Here is a 148-residue protein sequence, read N- to C-terminus: FAD synthase (148 aa).

ATP is bound by residues 14 to 15 (VF), 19 to 22 (HVGH), and Asp-100.

This sequence belongs to the archaeal FAD synthase family. Homodimer. Requires a divalent metal cation as cofactor.

The catalysed reaction is FMN + ATP + H(+) = FAD + diphosphate. Its pathway is cofactor biosynthesis; FAD biosynthesis; FAD from FMN: step 1/1. Its function is as follows. Catalyzes the transfer of the AMP portion of ATP to flavin mononucleotide (FMN) to produce flavin adenine dinucleotide (FAD) coenzyme. The sequence is that of FAD synthase from Thermococcus sibiricus (strain DSM 12597 / MM 739).